The following is a 100-amino-acid chain: uncharacterized protein (100 aa).

The first 26 residues, M1–A26, serve as a signal peptide directing secretion.

This is an uncharacterized protein from Bacillus subtilis (strain 168).